The following is a 249-amino-acid chain: ATP synthase subunit a (249 aa).

6 helical membrane passes run 30–50 (SAYM…GVAG), 84–104 (FFPL…VGII), 114–134 (LIVT…YGFY), 143–163 (IFVP…IEVF), 196–216 (LLAG…GMVI), and 221–241 (LELL…CIYL).

It belongs to the ATPase A chain family. As to quaternary structure, F-type ATPases have 2 components, CF(1) - the catalytic core - and CF(0) - the membrane proton channel. CF(1) has five subunits: alpha(3), beta(3), gamma(1), delta(1), epsilon(1). CF(0) has four main subunits: a, b, b' and c.

The protein resides in the cell inner membrane. Functionally, key component of the proton channel; it plays a direct role in the translocation of protons across the membrane. In Rhodopseudomonas palustris (strain BisB18), this protein is ATP synthase subunit a.